Reading from the N-terminus, the 128-residue chain is Ribosome-binding factor A (128 aa).

The protein belongs to the RbfA family. Monomer. Binds 30S ribosomal subunits, but not 50S ribosomal subunits or 70S ribosomes.

The protein localises to the cytoplasm. One of several proteins that assist in the late maturation steps of the functional core of the 30S ribosomal subunit. Associates with free 30S ribosomal subunits (but not with 30S subunits that are part of 70S ribosomes or polysomes). Required for efficient processing of 16S rRNA. May interact with the 5'-terminal helix region of 16S rRNA. This Herminiimonas arsenicoxydans protein is Ribosome-binding factor A.